Here is a 329-residue protein sequence, read N- to C-terminus: Ubiquinol oxidase 1c, mitochondrial (329 aa).

The N-terminal 45 residues, 1–45 (MITTLLRRSLLDASKQATSINGILFHQLAPAKYFRVPAVGGLRDF), are a transit peptide targeting the mitochondrion. A helical transmembrane segment spans residues 154–174 (AIMLETVAAVPGMVGGMLMHF). Residues Glu-158, Glu-197, and His-200 each coordinate Fe cation. Residues 216–236 (ALVISVQGVFFNAYLIGYIIS) form a helical membrane-spanning segment. Residues Glu-248, Glu-299, and His-302 each contribute to the Fe cation site.

The protein belongs to the alternative oxidase family. In terms of assembly, homodimer; disulfide-linked. The cofactor is Fe cation. Expressed in roots, stems, leaves, cotyledons and flowers. High expression in stamens.

The protein localises to the mitochondrion inner membrane. It catalyses the reaction 2 a ubiquinol + O2 = 2 a ubiquinone + 2 H2O. In terms of biological role, catalyzes the cyanide-resistant oxidation of ubiquinol and the reduction of molecular oxygen to water, but does not translocate protons and consequently is not linked to oxidative phosphorylation. May increase respiration when the cytochrome respiratory pathway is restricted, or in response to low temperatures. This is Ubiquinol oxidase 1c, mitochondrial (AOX1C) from Arabidopsis thaliana (Mouse-ear cress).